A 153-amino-acid polypeptide reads, in one-letter code: MVAKAVCVINGDAKGTVYFEQEDACAPVKVCGEITGLNKGQHGFHVHEFGDNTNGCMSSGPHFNPLNKEHGAPTDENRHLGDLGNIEAPGDGPTKVCINDSKITLFGENSIVGRTVVVHADPDDLGKGGHELSKSTGNAGARIGCGVIGICKI.

Cu cation-binding residues include histidine 45, histidine 47, and histidine 62. Cysteine 56 and cysteine 145 form a disulfide bridge. Zn(2+) is bound by residues histidine 62, histidine 70, histidine 79, and aspartate 82. Histidine 119 serves as a coordination point for Cu cation.

This sequence belongs to the Cu-Zn superoxide dismutase family. Homodimer. The cofactor is Cu cation. It depends on Zn(2+) as a cofactor.

The protein resides in the cytoplasm. It carries out the reaction 2 superoxide + 2 H(+) = H2O2 + O2. Its function is as follows. Destroys radicals which are normally produced within the cells and which are toxic to biological systems. The chain is Superoxide dismutase [Cu-Zn] (Sod) from Chymomyza amoena.